Reading from the N-terminus, the 556-residue chain is Arginine--tRNA ligase (556 aa).

Residues 129–139 (ANPTGPLHVGH) carry the 'HIGH' region motif.

It belongs to the class-I aminoacyl-tRNA synthetase family. As to quaternary structure, monomer.

The protein localises to the cytoplasm. It carries out the reaction tRNA(Arg) + L-arginine + ATP = L-arginyl-tRNA(Arg) + AMP + diphosphate. This chain is Arginine--tRNA ligase, found in Desulfosudis oleivorans (strain DSM 6200 / JCM 39069 / Hxd3) (Desulfococcus oleovorans).